Consider the following 370-residue polypeptide: MPTPSHLSKDPRYFDFRAARRVPETHAWPGLHDHPVVDGSGAGGGPDAVPVVDMRDPCAAEAVALAAQDWGAFLLEGHGVPLELLAGVEAAIGGMFALPASEKMRAVRRPGDSCGYGSPPISSFFSKCMWSEGYTFSPANLRSDLRKLWPKAGHDYRHFCAVMEEFHREMRALADKLLELFLVALGLTGEQVAAVESEHKIAETMTATMHLNWYPKCPDPKRALGLIAHTDSGFFTFVLQSLVPGLQLFRHGPDRWVTVPAVPGAMVVNVGDLFQILTNGRFHSVYHRAVVNRDSDRISLGYFLGPPAHVKVAPLREALAGTPAAYRAVTWPEYMGVRKKAFTTGASALKMVAISTDNDAANDTDDLISS.

In terms of domain architecture, Fe2OG dioxygenase spans M205–P306. Positions 229, 231, and 287 each coordinate Fe cation. Residue R297 is part of the active site.

It belongs to the iron/ascorbate-dependent oxidoreductase family. GA3OX subfamily. L-ascorbate is required as a cofactor. Fe cation serves as cofactor. Expressed in internodes, nodes and the ear of the elongating stem.

The enzyme catalyses gibberellin A20 + 2-oxoglutarate + O2 = gibberellin A1 + succinate + CO2. Converts the inactive gibberellin precursors GA9 and GA20 in the bioactives gibberellins GA4 and GA1. Also accepts GA15, GA44, the 2,3-unsaturated GA5 and 2,3-dihydroGA9 as substrate. No activity with GA12, GA53, GA24, GA19 and GA25. Also possesses 2-beta-hydroxylase, 2,3-desaturase, 2,3-epoxidase and 13-hydroxylase activities. This Triticum aestivum (Wheat) protein is Gibberellin 3-beta-dioxygenase 2-1 (GA3ox2-1).